We begin with the raw amino-acid sequence, 383 residues long: Creatine kinase, testis isozyme (383 aa).

A Phosphagen kinase N-terminal domain is found at 14-100 (KRLSPEEEFP…LDPIIEDRHG (87 aa)). Positions 99 to 112 (HGGYKPTDKHKTDL) are enriched in basic and acidic residues. Positions 99-119 (HGGYKPTDKHKTDLNPDNLKG) are disordered. The 243-residue stretch at 127-369 (YVISSRVRTG…KLLVEMEKKL (243 aa)) folds into the Phosphagen kinase C-terminal domain. Residues 130 to 134 (SSRVR), H193, R238, R294, 322 to 327 (RGTGGV), and D337 each bind ATP.

Belongs to the ATP:guanido phosphotransferase family. Exists in many tissues, but preferentially in testis.

It catalyses the reaction creatine + ATP = N-phosphocreatine + ADP + H(+). Reversibly catalyzes the transfer of phosphate between ATP and various phosphogens (e.g. creatine phosphate). Creatine kinase isoenzymes play a central role in energy transduction in tissues with large, fluctuating energy demands, such as skeletal muscle, heart, brain and spermatozoa. This chain is Creatine kinase, testis isozyme (tck1), found in Oncorhynchus mykiss (Rainbow trout).